Here is a 622-residue protein sequence, read N- to C-terminus: DNA mismatch repair protein MutL (622 aa).

It belongs to the DNA mismatch repair MutL/HexB family.

In terms of biological role, this protein is involved in the repair of mismatches in DNA. It is required for dam-dependent methyl-directed DNA mismatch repair. May act as a 'molecular matchmaker', a protein that promotes the formation of a stable complex between two or more DNA-binding proteins in an ATP-dependent manner without itself being part of a final effector complex. In Actinobacillus pleuropneumoniae serotype 3 (strain JL03), this protein is DNA mismatch repair protein MutL.